Here is a 227-residue protein sequence, read N- to C-terminus: Ubiquitin domain-containing protein 1 (227 aa).

Residues 1 to 35 (MGNCVGRQRRERPAAPGHPRKRAGRNEPLKKERLK) are disordered. Basic and acidic residues predominate over residues 24-35 (GRNEPLKKERLK). One can recognise a Ubiquitin-like domain in the interval 149 to 224 (FPLKVRLSTG…IQVIINQPPP (76 aa)).

As to quaternary structure, interacts with UBTD1.

In terms of biological role, may be involved in the regulation of cellular senescence through a positive feedback loop with TP53. Is a TP53 downstream target gene that increases the stability of TP53 protein by promoting the ubiquitination and degradation of MDM2. The sequence is that of Ubiquitin domain-containing protein 1 (UBTD1) from Homo sapiens (Human).